Here is a 68-residue protein sequence, read N- to C-terminus: DNA-directed RNA polymerase subunit omega (68 aa).

This sequence belongs to the RNA polymerase subunit omega family. The RNAP catalytic core consists of 2 alpha, 1 beta, 1 beta' and 1 omega subunit. When a sigma factor is associated with the core the holoenzyme is formed, which can initiate transcription.

The catalysed reaction is RNA(n) + a ribonucleoside 5'-triphosphate = RNA(n+1) + diphosphate. Promotes RNA polymerase assembly. Latches the N- and C-terminal regions of the beta' subunit thereby facilitating its interaction with the beta and alpha subunits. The chain is DNA-directed RNA polymerase subunit omega from Syntrophotalea carbinolica (strain DSM 2380 / NBRC 103641 / GraBd1) (Pelobacter carbinolicus).